A 510-amino-acid chain; its full sequence is AAA-ATPase At3g28540 (510 aa).

The chain crosses the membrane as a helical span at residues 7-25; sequence LFGFTGTTMASLMFFWSVY. Residue 246–253 participates in ATP binding; it reads GPPGTGKS. The interval 460 to 510 is disordered; the sequence is KEKAKKLAEEEKMKKAARDARRIKKKAEEEHKKKNKVEENGDVSHDNGNHI.

It belongs to the AAA ATPase family. BCS1 subfamily. Mg(2+) is required as a cofactor.

The protein resides in the membrane. It catalyses the reaction ATP + H2O = ADP + phosphate + H(+). The chain is AAA-ATPase At3g28540 from Arabidopsis thaliana (Mouse-ear cress).